The following is a 113-amino-acid chain: MGKKGALVKNIGIEGVNPPSKTCDDINCPFHGNLRVRGIILEGRLIRYRAEKTGVVERDYLFYDTKYKRYERRRSRIHVHIPPCLDVKEGDNVIIAECRPIAKSVSFVVIGKR.

Belongs to the universal ribosomal protein uS17 family. As to quaternary structure, part of the 30S ribosomal subunit.

Functionally, one of the primary rRNA binding proteins, it binds specifically to the 5'-end of 16S ribosomal RNA. The sequence is that of Small ribosomal subunit protein uS17 from Sulfurisphaera tokodaii (strain DSM 16993 / JCM 10545 / NBRC 100140 / 7) (Sulfolobus tokodaii).